Reading from the N-terminus, the 627-residue chain is Membrane protein insertase YidC (627 aa).

6 consecutive transmembrane segments (helical) span residues 3-23, 376-396, 450-470, 502-522, 534-554, and 558-578; these read KNTV…SWLN, WGLI…PLAY, LPML…PTTI, FYGN…ILYI, EGMA…LFFF, and ASGL…QYMS.

This sequence belongs to the OXA1/ALB3/YidC family. Type 1 subfamily. Interacts with the Sec translocase complex via SecD. Specifically interacts with transmembrane segments of nascent integral membrane proteins during membrane integration.

Its subcellular location is the cell inner membrane. Required for the insertion and/or proper folding and/or complex formation of integral membrane proteins into the membrane. Involved in integration of membrane proteins that insert both dependently and independently of the Sec translocase complex, as well as at least some lipoproteins. Aids folding of multispanning membrane proteins. The sequence is that of Membrane protein insertase YidC from Porphyromonas gingivalis (strain ATCC BAA-308 / W83).